Consider the following 707-residue polypeptide: Signal transducer and activator of transcription A (707 aa).

Positions 70 to 89 are enriched in polar residues; it reads LNQSDQFNLGRSNNLTPRTN. A disordered region spans residues 70-246; it reads LNQSDQFNLG…GNPNLSSPQP (177 aa). A compositionally biased stretch (low complexity) spans 90 to 111; sequence QLQQLQQQQQQQQQPQQQQQQQ. The segment covering 112–121 has biased composition (polar residues); that stretch reads TYGTQSPIHM. Residues 142–238 show a composition bias toward low complexity; the sequence is QQSYNNNNSN…QQQQQQQQGN (97 aa). Residues 242 to 356 adopt a coiled-coil conformation; that stretch reads SSPQPILDTI…IQSILNPQHS (115 aa). A DNA-binding region spans residues 443–487; sequence KFLAGTRKCSVNLKFGVNIRDLDNVTTTVESDASNPFVVITNECQ. The region spanning 583 to 686 is the SH2 domain; it reads WQEGIIYGYM…FLKLHKDTAL (104 aa). Phosphotyrosine is present on Tyr702.

It belongs to the transcription factor STAT family. Monomer, in the absence of tyrosine phosphorylation. Homodimer, or heterodimer with another family member, when tyrosine phosphorylated. Post-translationally, tyrosine phosphorylated in response to cAMP. Not tyrosine phosphorylated in growing cells. Tyrosine phosphorylation is first detected at the tight mound stage, continues throughout the slug stage and early culmination, and starts to decrease at mid-culmination. Barely detectable in fruiting bodies.

The protein localises to the cytoplasm. It is found in the nucleus. Functionally, transcription factor that binds to 5'-TTGAATTGA-3' elements in the promoter region of target genes. Functions as a repressor of the ecmB gene. Regulates the differentiation of prestalk cells during development. The chain is Signal transducer and activator of transcription A (dstA) from Dictyostelium discoideum (Social amoeba).